Reading from the N-terminus, the 218-residue chain is Histone H1.1 (218 aa).

A disordered region spans residues 1–42 (MSEVALPAPAASTSPEKPSAGKKAKKPAKAAAAAKKKPAGPS). Residue serine 2 is modified to N-acetylserine. 2 positions are modified to phosphoserine: serine 2 and serine 12. Lysine 17 is subject to N6-acetyllysine. Over residues 20–38 (AGKKAKKPAKAAAAAKKKP) the composition is skewed to basic residues. Position 37 is an N6-(beta-hydroxybutyryl)lysine (lysine 37). The 74-residue stretch at 39 to 112 (AGPSVSELIV…GASGSFKLNK (74 aa)) folds into the H15 domain. Serine 44 carries the phosphoserine modification. Position 55 is an N6-(beta-hydroxybutyryl)lysine (lysine 55). Arginine 57 carries the citrulline modification. At lysine 67 the chain carries N6-(beta-hydroxybutyryl)lysine. Lysine 78 carries the post-translational modification N6-acetyllysine. Lysine 88 carries the N6-(beta-hydroxybutyryl)lysine modification. N6-(beta-hydroxybutyryl)lysine; alternate is present on lysine 93. Lysine 93 carries the post-translational modification N6-acetyllysine; alternate. Residue serine 107 is modified to Phosphoserine; by PKC. N6-(beta-hydroxybutyryl)lysine is present on lysine 109. Residues 116–218 (SVDAKPTATK…KPKKAAPKKK (103 aa)) are disordered. A compositionally biased stretch (low complexity) spans 119–149 (AKPTATKVATKTKVTSASKKPKKASGAAAAK). The residue at position 125 (lysine 125) is an N6-acetyllysine. 2 stretches are compositionally biased toward basic residues: residues 150–183 (KSVK…KKVA) and 190–218 (KAVK…PKKK). At threonine 206 the chain carries Phosphothreonine.

This sequence belongs to the histone H1/H5 family. Interacts with DFFB. Post-translationally, H1 histones are progressively phosphorylated during the cell cycle, becoming maximally phosphorylated during late G2 phase and M phase, and being dephosphorylated sharply thereafter. In terms of processing, citrullination at Arg-57 (H1R54ci) by PADI4 takes place within the DNA-binding site of H1 and results in its displacement from chromatin and global chromatin decondensation, thereby promoting pluripotency and stem cell maintenance.

The protein localises to the nucleus. The protein resides in the chromosome. H1 histones bind to linker DNA between nucleosomes forming the macromolecular structure known as the chromatin fiber. H1 histones are necessary for the condensation of nucleosome chains into higher-order structured fibers. Also acts as a regulator of individual gene transcription through chromatin remodeling. The chain is Histone H1.1 from Bos taurus (Bovine).